A 602-amino-acid chain; its full sequence is UvrABC system protein C (602 aa).

A GIY-YIG domain is found at 19-97 (EEPGVYRMIG…IKSLAPRYNI (79 aa)). The 36-residue stretch at 206–241 (SEVIDDLTARMHAAAERLAFEEAAACRDQVRVLQAV) folds into the UVR domain.

This sequence belongs to the UvrC family. As to quaternary structure, interacts with UvrB in an incision complex.

The protein resides in the cytoplasm. Its function is as follows. The UvrABC repair system catalyzes the recognition and processing of DNA lesions. UvrC both incises the 5' and 3' sides of the lesion. The N-terminal half is responsible for the 3' incision and the C-terminal half is responsible for the 5' incision. This Aromatoleum aromaticum (strain DSM 19018 / LMG 30748 / EbN1) (Azoarcus sp. (strain EbN1)) protein is UvrABC system protein C.